A 432-amino-acid chain; its full sequence is Phosphomethylpyrimidine synthase (432 aa).

Substrate contacts are provided by residues N69, M98, Y127, H163, S185–G187, D226–R229, and E265. Position 269 (H269) interacts with Zn(2+). Substrate is bound at residue Y292. A Zn(2+)-binding site is contributed by H333. Positions 409, 412, and 416 each coordinate [4Fe-4S] cluster.

The protein belongs to the ThiC family. The cofactor is [4Fe-4S] cluster.

It carries out the reaction 5-amino-1-(5-phospho-beta-D-ribosyl)imidazole + S-adenosyl-L-methionine = 4-amino-2-methyl-5-(phosphooxymethyl)pyrimidine + CO + 5'-deoxyadenosine + formate + L-methionine + 3 H(+). The protein operates within cofactor biosynthesis; thiamine diphosphate biosynthesis. In terms of biological role, catalyzes the synthesis of the hydroxymethylpyrimidine phosphate (HMP-P) moiety of thiamine from aminoimidazole ribotide (AIR) in a radical S-adenosyl-L-methionine (SAM)-dependent reaction. This Pelotomaculum thermopropionicum (strain DSM 13744 / JCM 10971 / SI) protein is Phosphomethylpyrimidine synthase.